The following is a 181-amino-acid chain: Gastrokine-3 (181 aa).

An N-terminal signal peptide occupies residues 1-20 (MKHLVASSILGVFVLTPSLA). The region spanning 53 to 145 (NNIFSEWDGI…MCRDDPTYFA (93 aa)) is the BRICHOS domain. A disulfide bridge links C80 with C137.

The protein belongs to the gastrokine family.

The protein localises to the secreted. In terms of biological role, may inhibit gastric epithelial cell proliferation. In Homo sapiens (Human), this protein is Gastrokine-3 (GKN3P).